The chain runs to 282 residues: Endonuclease V (282 aa).

The Mg(2+) site is built by D52 and D126. Positions 250 to 282 (SLGLPGPPTPRSPKAQRPVACPKGDSGESSALC) are disordered.

This sequence belongs to the endonuclease V family. In terms of assembly, monomer. Interacts with PABPC1; the interaction is RNA-dependent and stimulates ENDOV activity. Mg(2+) is required as a cofactor.

The protein resides in the cytoplasm. The protein localises to the nucleus. It is found in the nucleolus. Its subcellular location is the stress granule. Its activity is regulated as follows. Inhibited by normal intracellular concentrations of ATP. Functionally, endoribonuclease that specifically cleaves inosine-containing RNAs: cleaves RNA at the second phosphodiester bond 3' to inosine. Active against both single-stranded and double-stranded RNAs. Has strong preference for single-stranded RNAs (ssRNAs) toward double-stranded RNAs (dsRNAs). Cleaves mRNAs and tRNAs containing inosine. Also able to cleave structure-specific dsRNA substrates containing the specific sites 5'-IIUI-3' and 5'-UIUU-3'. Inosine is present in a number of RNAs following editing; the function of inosine-specific endoribonuclease is still unclear: it could either play a regulatory role in edited RNAs, or be involved in antiviral response by removing the hyperedited long viral dsRNA genome that has undergone A-to-I editing. Binds branched DNA structures. Endoribonuclease that specifically cleaves inosine-containing RNAs: cleaves RNA at the second phosphodiester bond 3' to inosine. Active against both single-stranded and double-stranded RNAs. Cleaves tRNAs containing inosine. The polypeptide is Endonuclease V (ENDOV) (Homo sapiens (Human)).